We begin with the raw amino-acid sequence, 89 residues long: Teretoxin Tan22.12 (89 aa).

An N-terminal signal peptide occupies residues 1-22 (MKVLFTLAMIVVTLCLGQRMRR).

Belongs to the teretoxin C (TC) superfamily. Post-translationally, contains 4 disulfide bonds. In terms of tissue distribution, expressed by the venom duct.

It localises to the secreted. This chain is Teretoxin Tan22.12, found in Terebra anilis (Auger snail).